Here is a 380-residue protein sequence, read N- to C-terminus: Probable tRNA sulfurtransferase (380 aa).

One can recognise a THUMP domain in the interval 58-162; sequence EEVIERLKKV…MAFVYAGVIE (105 aa). ATP contacts are provided by residues 178–179, 203–204, Arg-260, Gly-282, and Gln-291; these read LL and YF.

Belongs to the ThiI family.

The protein localises to the cytoplasm. It catalyses the reaction [ThiI sulfur-carrier protein]-S-sulfanyl-L-cysteine + a uridine in tRNA + 2 reduced [2Fe-2S]-[ferredoxin] + ATP + H(+) = [ThiI sulfur-carrier protein]-L-cysteine + a 4-thiouridine in tRNA + 2 oxidized [2Fe-2S]-[ferredoxin] + AMP + diphosphate. The enzyme catalyses [ThiS sulfur-carrier protein]-C-terminal Gly-Gly-AMP + S-sulfanyl-L-cysteinyl-[cysteine desulfurase] + AH2 = [ThiS sulfur-carrier protein]-C-terminal-Gly-aminoethanethioate + L-cysteinyl-[cysteine desulfurase] + A + AMP + 2 H(+). Its pathway is cofactor biosynthesis; thiamine diphosphate biosynthesis. Functionally, catalyzes the ATP-dependent transfer of a sulfur to tRNA to produce 4-thiouridine in position 8 of tRNAs, which functions as a near-UV photosensor. Also catalyzes the transfer of sulfur to the sulfur carrier protein ThiS, forming ThiS-thiocarboxylate. This is a step in the synthesis of thiazole, in the thiamine biosynthesis pathway. The sulfur is donated as persulfide by IscS. This Thermoanaerobacter sp. (strain X514) protein is Probable tRNA sulfurtransferase.